The sequence spans 340 residues: Glycerol-3-phosphate dehydrogenase [NAD(P)+] (340 aa).

Positions 11, 33, and 110 each coordinate NADPH. Lys110, Gly144, and Ser146 together coordinate sn-glycerol 3-phosphate. Ala148 provides a ligand contact to NADPH. Sn-glycerol 3-phosphate contacts are provided by Lys199, Asp252, Ser262, Arg263, and Asn264. Lys199 (proton acceptor) is an active-site residue. Arg263 contacts NADPH. Residues Val287 and Glu289 each coordinate NADPH.

Belongs to the NAD-dependent glycerol-3-phosphate dehydrogenase family.

The protein localises to the cytoplasm. It carries out the reaction sn-glycerol 3-phosphate + NAD(+) = dihydroxyacetone phosphate + NADH + H(+). The enzyme catalyses sn-glycerol 3-phosphate + NADP(+) = dihydroxyacetone phosphate + NADPH + H(+). Its pathway is membrane lipid metabolism; glycerophospholipid metabolism. In terms of biological role, catalyzes the reduction of the glycolytic intermediate dihydroxyacetone phosphate (DHAP) to sn-glycerol 3-phosphate (G3P), the key precursor for phospholipid synthesis. This is Glycerol-3-phosphate dehydrogenase [NAD(P)+] from Polynucleobacter necessarius subsp. necessarius (strain STIR1).